The primary structure comprises 521 residues: Importin subunit alpha-3 (521 aa).

Ala-2 bears the N-acetylalanine mark. An IBB domain is found at 2–58 (ADNEKLDNQRLKNFKNKGRDLETMRRQRNEVVVELRKNKRDEHLLKRRNVPQEDICE). The Nuclear localization signal motif lies at 43 to 52 (EHLLKRRNVP). Ser-60 carries the phosphoserine modification. An ARM 1; truncated repeat occupies 66-106 (YRVQNTSLEAIVQNASSDNQGIQLSAVQAARKLLSSDRNPP). 8 ARM repeats span residues 107–149 (IDDL…TSEQ), 150–194 (TQAV…CRDY), 195–233 (VISL…HKDP), 234–278 (PPPM…EQIQ), 279–318 (MVID…TDEQ), 319–360 (TQVV…NQQQ), 361–400 (VQAV…ISGR), and 401–443 (KDQV…KMAE). The NLS binding site (major) stretch occupies residues 137–229 (WALTNIASGT…VTWVMVNLCR (93 aa)). Residues 306–394 (RAVGNIVTGT…QKEAAWAISN (89 aa)) are NLS binding site (minor). The stretch at 447-485 (ETIANLIEECGGLEKIEQLQNHENEDIYKLAYEIIDQFF) is one ARM 10; atypical repeat.

It belongs to the importin alpha family. In terms of assembly, forms a complex with importin subunit beta-1 (KPNB1). Interacts with SNAI1. Interacts with TALDO1 isoform 1. Interacts with CYB1. As to expression, detected more or less in all tissues examined (Ehrlich ascites tumor cells, testis, kidney, spleen, liver, heart, lung, thymus, skeletal muscle, cerebellum and brain (without cerebellum)). Multiple-sized transcripts were highly expressed, especially in testis.

Its subcellular location is the cytoplasm. It is found in the nucleus. Functionally, functions in nuclear protein import as an adapter protein for nuclear receptor KPNB1. Binds specifically and directly to substrates containing either a simple or bipartite NLS motif. Docking of the importin/substrate complex to the nuclear pore complex (NPC) is mediated by KPNB1 through binding to nucleoporin FxFG repeats and the complex is subsequently translocated through the pore by an energy requiring, Ran-dependent mechanism. At the nucleoplasmic side of the NPC, Ran binds to importin-beta and the three components separate and importin-alpha and -beta are re-exported from the nucleus to the cytoplasm where GTP hydrolysis releases Ran from importin. The directionality of nuclear import is thought to be conferred by an asymmetric distribution of the GTP- and GDP-bound forms of Ran between the cytoplasm and nucleus. Mediates nuclear import of AARS1, MRTFA and RANBP3. This chain is Importin subunit alpha-3 (Kpna4), found in Mus musculus (Mouse).